We begin with the raw amino-acid sequence, 162 residues long: B-box zinc finger protein 23 (162 aa).

The Zn(2+) site is built by cysteine 5, cysteine 8, cysteine 28, histidine 33, cysteine 63, cysteine 66, cysteine 86, and histidine 91. The B box-type 1; atypical zinc finger occupies 5-47; sequence CEVCEKAEAEVLCCSDEAVLCKPCDIKVHEANKLFQRHHRVAL. Residues 63-101 form a B box-type 2; atypical zinc finger; that stretch reads CDICQERKGYFFCLEDRAMLCNDCDEAIHTCNSHQRFLL. Residues 137–162 are disordered; the sequence is QYSSEETEAGNSGEIVHKNPSVILSP.

It is found in the nucleus. Probable transcription factor that may be involved in seedling photomorphogenesis. This Arabidopsis thaliana (Mouse-ear cress) protein is B-box zinc finger protein 23.